The sequence spans 496 residues: Cytochrome P450 4ae1 (496 aa).

Cysteine 443 serves as a coordination point for heme.

Belongs to the cytochrome P450 family. Heme is required as a cofactor.

It is found in the endoplasmic reticulum membrane. The protein localises to the microsome membrane. May be involved in the metabolism of insect hormones and in the breakdown of synthetic insecticides. The protein is Cytochrome P450 4ae1 (Cyp4ae1) of Drosophila melanogaster (Fruit fly).